A 347-amino-acid chain; its full sequence is Biotin synthase (347 aa).

Positions asparagine 54–lysine 273 constitute a Radical SAM core domain. 3 residues coordinate [4Fe-4S] cluster: cysteine 69, cysteine 73, and cysteine 76. The [2Fe-2S] cluster site is built by cysteine 113, cysteine 144, cysteine 204, and arginine 277.

It belongs to the radical SAM superfamily. Biotin synthase family. In terms of assembly, homodimer. [4Fe-4S] cluster is required as a cofactor. Requires [2Fe-2S] cluster as cofactor.

The catalysed reaction is (4R,5S)-dethiobiotin + (sulfur carrier)-SH + 2 reduced [2Fe-2S]-[ferredoxin] + 2 S-adenosyl-L-methionine = (sulfur carrier)-H + biotin + 2 5'-deoxyadenosine + 2 L-methionine + 2 oxidized [2Fe-2S]-[ferredoxin]. It functions in the pathway cofactor biosynthesis; biotin biosynthesis; biotin from 7,8-diaminononanoate: step 2/2. Functionally, catalyzes the conversion of dethiobiotin (DTB) to biotin by the insertion of a sulfur atom into dethiobiotin via a radical-based mechanism. The protein is Biotin synthase of Afipia carboxidovorans (strain ATCC 49405 / DSM 1227 / KCTC 32145 / OM5) (Oligotropha carboxidovorans).